The sequence spans 65 residues: Large ribosomal subunit protein bL35 (65 aa).

Composition is skewed to basic residues over residues 1–15 (MPKMKTKKSASKRFT) and 26–44 (QAFKRHILTKKTTKNKRQL). The segment at 1–65 (MPKMKTKKSA…KSVRAMMPYA (65 aa)) is disordered.

Belongs to the bacterial ribosomal protein bL35 family.

The protein is Large ribosomal subunit protein bL35 of Ralstonia nicotianae (strain ATCC BAA-1114 / GMI1000) (Ralstonia solanacearum).